Consider the following 1213-residue polypeptide: DNA-directed RNA polymerase subunit beta' (1213 aa).

Cys60, Cys62, Cys75, and Cys78 together coordinate Zn(2+). Mg(2+) is bound by residues Asp450, Asp452, and Asp454. Zn(2+) is bound by residues Cys819, Cys893, Cys900, and Cys903.

It belongs to the RNA polymerase beta' chain family. The RNAP catalytic core consists of 2 alpha, 1 beta, 1 beta' and 1 omega subunit. When a sigma factor is associated with the core the holoenzyme is formed, which can initiate transcription. The cofactor is Mg(2+). It depends on Zn(2+) as a cofactor.

It catalyses the reaction RNA(n) + a ribonucleoside 5'-triphosphate = RNA(n+1) + diphosphate. Functionally, DNA-dependent RNA polymerase catalyzes the transcription of DNA into RNA using the four ribonucleoside triphosphates as substrates. The sequence is that of DNA-directed RNA polymerase subunit beta' from Streptococcus pyogenes serotype M6 (strain ATCC BAA-946 / MGAS10394).